The following is a 312-amino-acid chain: Beta-ketoacyl-[acyl-carrier-protein] synthase III (312 aa).

Catalysis depends on residues cysteine 112 and histidine 237. The ACP-binding stretch occupies residues 238–242 (QANIR). The active site involves asparagine 267.

The protein belongs to the thiolase-like superfamily. FabH family. As to quaternary structure, homodimer.

It localises to the cytoplasm. It carries out the reaction malonyl-[ACP] + acetyl-CoA + H(+) = 3-oxobutanoyl-[ACP] + CO2 + CoA. The protein operates within lipid metabolism; fatty acid biosynthesis. Functionally, catalyzes the condensation reaction of fatty acid synthesis by the addition to an acyl acceptor of two carbons from malonyl-ACP. Catalyzes the first condensation reaction which initiates fatty acid synthesis and may therefore play a role in governing the total rate of fatty acid production. Possesses both acetoacetyl-ACP synthase and acetyl transacylase activities. Its substrate specificity determines the biosynthesis of branched-chain and/or straight-chain of fatty acids. In Listeria innocua serovar 6a (strain ATCC BAA-680 / CLIP 11262), this protein is Beta-ketoacyl-[acyl-carrier-protein] synthase III.